A 376-amino-acid chain; its full sequence is Arf-GAP with dual PH domain-containing protein 2 (376 aa).

Residues 9–130 (KRLLELLQAA…EFMAEKAVSP (122 aa)) form the Arf-GAP domain. The C4-type zinc-finger motif lies at 25-48 (CADCGAADPDWASYKLGVFICLHC). 2 PH domains span residues 131-232 (PGDR…AARL) and 254-360 (NYLK…GVLS).

As to expression, expressed in many tissues, with highest levels in fat, heart and skeletal muscle. Also detected in kidney, liver and lung.

It is found in the cytoplasm. Its subcellular location is the cell membrane. Functionally, GTPase-activating protein for the ADP ribosylation factor family (Potential). Binds phosphatidylinositol 4,5-bisphosphate, phosphatidylinositol 3,4,5-trisphosphate (PtdInsP3) and inositol 1,3,4,5-tetrakisphosphate (InsP4). Binding of phosphatidylinositol 3,5-bisphosphate and phosphatidylinositol 3,4-bisphosphate occurs at a much lower affinity. Possesses a stoichiometry of two binding sites for InsP4 with identical affinity. The sequence is that of Arf-GAP with dual PH domain-containing protein 2 (Adap2) from Rattus norvegicus (Rat).